A 100-amino-acid polypeptide reads, in one-letter code: uncharacterized protein (100 aa).

Positions 78–100 (KPYRTESGTSSSNRMMLPPRQHV) are disordered.

This is an uncharacterized protein from Caenorhabditis elegans.